Reading from the N-terminus, the 122-residue chain is Acidic phospholipase A2 CTs-A3 (122 aa).

7 disulfides stabilise this stretch: cysteine 26/cysteine 116, cysteine 28/cysteine 44, cysteine 43/cysteine 95, cysteine 49/cysteine 122, cysteine 50/cysteine 88, cysteine 57/cysteine 81, and cysteine 75/cysteine 86. 3 residues coordinate Ca(2+): tyrosine 27, glycine 29, and glycine 31. Residue histidine 47 is part of the active site. Residue aspartate 48 participates in Ca(2+) binding. Aspartate 89 is an active-site residue.

The cofactor is Ca(2+). Expressed by the venom gland.

The protein resides in the secreted. It carries out the reaction a 1,2-diacyl-sn-glycero-3-phosphocholine + H2O = a 1-acyl-sn-glycero-3-phosphocholine + a fatty acid + H(+). Its function is as follows. Snake venom phospholipase A2 (PLA2) that shows a moderate inhibition of ADP-induced human platelet aggregation when tested on platelet rich plasma. Exhibits moderate hydrolytic activities and prefers the anionic micelles (dPPC with deoxycholate) to the zwitterionic micelles (dPPC with Triton X-100). PLA2 catalyzes the calcium-dependent hydrolysis of the 2-acyl groups in 3-sn-phosphoglycerides. The sequence is that of Acidic phospholipase A2 CTs-A3 from Trimeresurus stejnegeri (Chinese green tree viper).